The sequence spans 265 residues: Hydroxyethylthiazole kinase (265 aa).

M43 is a substrate binding site. K118 and T165 together coordinate ATP. G192 lines the substrate pocket.

The protein belongs to the Thz kinase family. It depends on Mg(2+) as a cofactor.

The catalysed reaction is 5-(2-hydroxyethyl)-4-methylthiazole + ATP = 4-methyl-5-(2-phosphooxyethyl)-thiazole + ADP + H(+). The protein operates within cofactor biosynthesis; thiamine diphosphate biosynthesis; 4-methyl-5-(2-phosphoethyl)-thiazole from 5-(2-hydroxyethyl)-4-methylthiazole: step 1/1. In terms of biological role, catalyzes the phosphorylation of the hydroxyl group of 4-methyl-5-beta-hydroxyethylthiazole (THZ). This Pyrococcus furiosus (strain ATCC 43587 / DSM 3638 / JCM 8422 / Vc1) protein is Hydroxyethylthiazole kinase.